A 178-amino-acid polypeptide reads, in one-letter code: ATP synthase subunit b (178 aa).

Residues 30–50 traverse the membrane as a helical segment; that stretch reads FFFVLAIFLIVLAVIGTFVVP.

It belongs to the ATPase B chain family. F-type ATPases have 2 components, F(1) - the catalytic core - and F(0) - the membrane proton channel. F(1) has five subunits: alpha(3), beta(3), gamma(1), delta(1), epsilon(1). F(0) has three main subunits: a(1), b(2) and c(10-14). The alpha and beta chains form an alternating ring which encloses part of the gamma chain. F(1) is attached to F(0) by a central stalk formed by the gamma and epsilon chains, while a peripheral stalk is formed by the delta and b chains.

The protein localises to the cell membrane. Its function is as follows. F(1)F(0) ATP synthase produces ATP from ADP in the presence of a proton or sodium gradient. F-type ATPases consist of two structural domains, F(1) containing the extramembraneous catalytic core and F(0) containing the membrane proton channel, linked together by a central stalk and a peripheral stalk. During catalysis, ATP synthesis in the catalytic domain of F(1) is coupled via a rotary mechanism of the central stalk subunits to proton translocation. Component of the F(0) channel, it forms part of the peripheral stalk, linking F(1) to F(0). This chain is ATP synthase subunit b, found in Mycobacterium avium (strain 104).